Consider the following 570-residue polypeptide: Fibropellin-3 (570 aa).

The signal sequence occupies residues methionine 1 to threonine 17. The EGF-like 1 domain occupies tyrosine 18 to aspartate 55. 4 disulfide bridges follow: cysteine 23-cysteine 34, cysteine 28-cysteine 43, cysteine 45-cysteine 54, and cysteine 62-cysteine 88. N-linked (GlcNAc...) asparagine glycosylation occurs at asparagine 30. Positions cysteine 62–serine 175 constitute a CUB domain. A glycan (N-linked (GlcNAc...) asparagine) is linked at asparagine 136. One can recognise an EGF-like 2; calcium-binding domain in the interval aspartate 176–glutamate 212. 22 disulfide bridges follow: cysteine 180/cysteine 191, cysteine 185/cysteine 200, cysteine 202/cysteine 211, cysteine 218/cysteine 229, cysteine 223/cysteine 238, cysteine 240/cysteine 249, cysteine 256/cysteine 267, cysteine 261/cysteine 276, cysteine 278/cysteine 287, cysteine 294/cysteine 305, cysteine 299/cysteine 314, cysteine 316/cysteine 325, cysteine 332/cysteine 343, cysteine 337/cysteine 352, cysteine 354/cysteine 363, cysteine 370/cysteine 381, cysteine 375/cysteine 390, cysteine 392/cysteine 401, cysteine 408/cysteine 419, cysteine 413/cysteine 428, cysteine 430/cysteine 439, and cysteine 445/cysteine 521. The EGF-like 3; calcium-binding domain occupies aspartate 214–glutamate 250. The 37-residue stretch at asparagine 252–glutamate 288 folds into the EGF-like 4; calcium-binding domain. The 37-residue stretch at aspartate 290–glutamate 326 folds into the EGF-like 5; calcium-binding domain. Positions asparagine 328–glutamate 364 constitute an EGF-like 6; calcium-binding domain. A glycan (N-linked (GlcNAc...) asparagine) is linked at asparagine 357. One can recognise an EGF-like 7 domain in the interval serine 366–glutamate 402. The EGF-like 8; calcium-binding domain maps to aspartate 404–glutamate 440. The region spanning glycine 443 to glutamine 562 is the Avidin-like domain.

As to quaternary structure, homotetramer.

The protein localises to the secreted. It is found in the extracellular space. Functionally, forms the apical lamina, a component of the extracellular matrix. This Strongylocentrotus purpuratus (Purple sea urchin) protein is Fibropellin-3 (EGF3).